The chain runs to 686 residues: Catalase-2 (686 aa).

Over residues 1–27 the composition is skewed to basic and acidic residues; that stretch reads MSDDQNKRVNEHSKDEQLEQYRTDNSG. A disordered region spans residues 1–43; it reads MSDDQNKRVNEHSKDEQLEQYRTDNSGKKMTTNQGLRVSEDEH. Residues histidine 78 and asparagine 151 contribute to the active site. Tyrosine 365 contributes to the heme binding site.

This sequence belongs to the catalase family. HPII subfamily. It depends on heme as a cofactor.

The catalysed reaction is 2 H2O2 = O2 + 2 H2O. Decomposes hydrogen peroxide into water and oxygen; serves to protect cells from the toxic effects of hydrogen peroxide. Involved in sporulation. The sequence is that of Catalase-2 (katE) from Bacillus subtilis (strain 168).